Consider the following 34-residue polypeptide: Cycloamanide B proprotein (34 aa).

The propeptide occupies 1 to 10; that stretch reads MSDINAARLP. The segment at residues 11-17 is a cross-link (cyclopeptide (Ser-Pro)); the sequence is SFFFPIP. Residues 18–34 constitute a propeptide that is removed on maturation; the sequence is CISDDIEMVLTRGESLC.

It belongs to the MSDIN fungal toxin family. In terms of processing, processed by the macrocyclase-peptidase enzyme POPB to yield a cyclic decapeptide. POPB first removes 10 residues from the N-terminus. Conformational trapping of the remaining peptide forces the enzyme to release this intermediate rather than proceed to macrocyclization. The enzyme rebinds the remaining peptide in a different conformation and catalyzes macrocyclization of the N-terminal 7 residues.

Its function is as follows. Cyclic heptapeptide that belongs to the MSDIN-like toxin family responsible for a large number of food poisoning cases and deaths. Cycloaminide B is non-toxic to mammals but shows immunosuppressive activity, probably through the inhibition of the action of interleukin-1 and interleukin-2. The chain is Cycloamanide B proprotein from Amanita phalloides (Death cap).